Reading from the N-terminus, the 187-residue chain is MAFLVEKQLFKALFSFFLLVLLFSDTVLSFRKTIDQKKPCKHFSFYFHDILYDGDNVANATSAAIVSPPGLGNFKFGKFVIFDGPITMDKNYLSKPVARAQGFYFYDMKMDFNSWFSYTLVFNSTEHKGTLNIMGADLMMEPTRDLSVVGGTGDFFMARGIATFVTDLFQGAKYFRVKMDIKLYECY.

A signal peptide spans 1–29 (MAFLVEKQLFKALFSFFLLVLLFSDTVLS). Residues Cys40 and Cys186 are joined by a disulfide bond. Asn59 and Asn123 each carry an N-linked (GlcNAc...) asparagine glycan.

The protein belongs to the plant dirigent protein family. Homodimer. As to expression, expressed in roots, cotyledon veins, leaf trichomes, flowers, siliques, and meristems. Present in interfascicular/vascular cambia and developing xylem.

It localises to the secreted. It is found in the extracellular space. The protein resides in the apoplast. Its function is as follows. Dirigent proteins impart stereoselectivity on the phenoxy radical-coupling reaction, yielding optically active lignans from two molecules of coniferyl alcohol in the biosynthesis of lignans, flavonolignans, and alkaloids and thus plays a central role in plant secondary metabolism. Enantiocomplementary dirigent protein that mediates the laccase-catalyzed enantioselective oxidative phenol coupling of (E)-coniferyl alcohol to (-)-pinoresinol. In Arabidopsis thaliana (Mouse-ear cress), this protein is Dirigent protein 6 (DIR6).